The primary structure comprises 156 residues: tRNA-specific adenosine deaminase (156 aa).

Residues 2–120 enclose the CMP/dCMP-type deaminase domain; that stretch reads TNDIYFMTLA…GSLMNLLQQS (119 aa). His53 provides a ligand contact to Zn(2+). Glu55 (proton donor) is an active-site residue. Residues Cys83 and Cys86 each coordinate Zn(2+).

It belongs to the cytidine and deoxycytidylate deaminase family. In terms of assembly, homodimer. Zn(2+) serves as cofactor.

The enzyme catalyses adenosine(34) in tRNA + H2O + H(+) = inosine(34) in tRNA + NH4(+). Functionally, catalyzes the deamination of adenosine to inosine at the wobble position 34 of tRNA(Arg2). This is tRNA-specific adenosine deaminase from Staphylococcus aureus (strain Mu50 / ATCC 700699).